The sequence spans 167 residues: D-aminoacyl-tRNA deacylase 2 (167 aa).

The Gly-transPro motif, allows the protein to recognize chirality of D-amino acids motif lies at 159–160 (GP).

This sequence belongs to the DTD family. As to quaternary structure, homodimer.

It localises to the cytoplasm. It catalyses the reaction a D-aminoacyl-tRNA + H2O = a tRNA + a D-alpha-amino acid + H(+). The catalysed reaction is glycyl-tRNA(Ala) + H2O = tRNA(Ala) + glycine + H(+). It carries out the reaction D-tyrosyl-tRNA(Tyr) + H2O = D-tyrosine + tRNA(Tyr). The enzyme catalyses L-alanyl-tRNA(Thr) + H2O = tRNA(Thr) + L-alanine + H(+). In terms of biological role, deacylates mischarged D-aminoacyl-tRNAs. Also deacylates mischarged glycyl-tRNA(Ala), protecting cells against glycine mischarging by AlaRS. Probably acts by rejecting L-amino acids from its binding site rather than specific recognition of D-amino acids. Catalyzes the hydrolysis of D-tyrosyl-tRNA(Tyr), has no activity on correctly charged L-tyrosyl-tRNA(Tyr). By recycling D-aminoacyl-tRNA to D-amino acids and free tRNA molecules, this enzyme counteracts the toxicity associated with the formation of D-aminoacyl-tRNA entities in vivo and helps enforce protein L-homochirality. In contrast to DTD1, deacylates L-Ala mischarged on tRNA(Thr)(G4.U69) by alanine-tRNA ligase AARS. Can deacylate L-Ala due to a relaxed specificity for substrate chirality caused by the trans conformation of the Gly-Pro motif in the active site. Also hydrolyzes correctly charged, achiral, glycyl-tRNA(Gly) in vitro, although in vivo EEF1A1/EF-Tu may protect cognate achiral glycyl-tRNA(Gly) from DTD2-mediated deacetylation. The chain is D-aminoacyl-tRNA deacylase 2 (DTD2) from Gallus gallus (Chicken).